The sequence spans 264 residues: Type III pantothenate kinase (264 aa).

6–13 (DSGNSRLK) contacts ATP. Substrate-binding positions include Tyr92 and 99–102 (GADR). The Proton acceptor role is filled by Asp101. Thr127 is a binding site for ATP. Thr177 is a substrate binding site.

The protein belongs to the type III pantothenate kinase family. In terms of assembly, homodimer. The cofactor is NH4(+). It depends on K(+) as a cofactor.

The protein resides in the cytoplasm. It catalyses the reaction (R)-pantothenate + ATP = (R)-4'-phosphopantothenate + ADP + H(+). Its pathway is cofactor biosynthesis; coenzyme A biosynthesis; CoA from (R)-pantothenate: step 1/5. In terms of biological role, catalyzes the phosphorylation of pantothenate (Pan), the first step in CoA biosynthesis. The chain is Type III pantothenate kinase from Bordetella petrii (strain ATCC BAA-461 / DSM 12804 / CCUG 43448).